A 146-amino-acid chain; its full sequence is NADH-ubiquinone oxidoreductase chain 6 (146 aa).

The next 4 membrane-spanning stretches (helical) occupy residues 10–30 (ILAI…LLFV), 43–63 (LMGI…FLFI), 81–101 (VIVL…PIAI), and 124–144 (APML…AIAM).

Belongs to the complex I subunit 6 family.

The protein resides in the mitochondrion membrane. It catalyses the reaction a ubiquinone + NADH + 5 H(+)(in) = a ubiquinol + NAD(+) + 4 H(+)(out). Functionally, core subunit of the mitochondrial membrane respiratory chain NADH dehydrogenase (Complex I) that is believed to belong to the minimal assembly required for catalysis. Complex I functions in the transfer of electrons from NADH to the respiratory chain. The immediate electron acceptor for the enzyme is believed to be ubiquinone. This chain is NADH-ubiquinone oxidoreductase chain 6 (NAD6), found in Candida albicans (strain SC5314 / ATCC MYA-2876) (Yeast).